We begin with the raw amino-acid sequence, 442 residues long: Cell division protein FtsA (442 aa).

The tract at residues 401–428 is disordered; sequence VTSYDNDSYDAPEETVYDEPEQKKSDED. A compositionally biased stretch (acidic residues) spans 407-419; it reads DSYDAPEETVYDE.

It belongs to the FtsA/MreB family. In terms of assembly, self-interacts. Interacts with FtsZ.

Its subcellular location is the cell membrane. Cell division protein that is involved in the assembly of the Z ring. May serve as a membrane anchor for the Z ring. This chain is Cell division protein FtsA, found in Enterococcus hirae.